A 120-amino-acid chain; its full sequence is Large ribosomal subunit protein uL18 (120 aa).

This sequence belongs to the universal ribosomal protein uL18 family. Part of the 50S ribosomal subunit; part of the 5S rRNA/L5/L18/L25 subcomplex. Contacts the 5S and 23S rRNAs.

Its function is as follows. This is one of the proteins that bind and probably mediate the attachment of the 5S RNA into the large ribosomal subunit, where it forms part of the central protuberance. The sequence is that of Large ribosomal subunit protein uL18 from Lawsonia intracellularis (strain PHE/MN1-00).